Here is a 921-residue protein sequence, read N- to C-terminus: cGMP-dependent 3',5'-cyclic phosphodiesterase (921 aa).

N-acetylmethionine is present on Met1. Disordered regions lie at residues 1-21 (MRRQPAASRDLFAQEPVPPGS) and 177-198 (ESSVAPEATQNPPEEAAGDQKG). Residues 177–188 (ESSVAPEATQNP) are compositionally biased toward polar residues. 2 GAF domains span residues 220-357 (DASS…STVL) and 389-528 (DVSV…GISI). Positions 411, 426, 445, 468, and 479 each coordinate 3',5'-cyclic GMP. The region spanning 558-882 (SDDEYTKLLH…EHWTKVSHKF (325 aa)) is the PDEase domain. His636 (proton donor) is an active-site residue. Zn(2+) is bound by residues His640, His676, Asp677, and Asp788. Position 677 (Asp677) interacts with Mg(2+).

Belongs to the cyclic nucleotide phosphodiesterase family. PDE2 subfamily. Homodimer. It depends on Zn(2+) as a cofactor. Mg(2+) is required as a cofactor.

The protein localises to the cell membrane. Its subcellular location is the cytoplasm. The protein resides in the mitochondrion. It is found in the mitochondrion inner membrane. It localises to the mitochondrion outer membrane. It carries out the reaction a nucleoside 3',5'-cyclic phosphate + H2O = a nucleoside 5'-phosphate + H(+). The catalysed reaction is 3',5'-cyclic GMP + H2O = GMP + H(+). It catalyses the reaction 3',5'-cyclic AMP + H2O = AMP + H(+). The 3',5'-cyclic-AMP phosphodiesterase activity is stimulated by 3',5'-cyclic GMP. CGMP-activated cyclic nucleotide phosphodiesterase with a dual-specificity for the second messengers cAMP and cGMP, which are key regulators of many important physiological processes. Has a higher efficiency with cGMP compared to cAMP. Plays a role in cell growth and migration. Its function is as follows. Regulates mitochondrial cAMP levels and respiration. Involved in the regulation of mitochondria morphology/dynamics and apoptotic cell death via local modulation of cAMP/PKA signaling in the mitochondrion, including the monitoring of local cAMP levels at the outer mitochondrial membrane and of PKA-dependent phosphorylation of DNM1L. In Bos taurus (Bovine), this protein is cGMP-dependent 3',5'-cyclic phosphodiesterase.